Consider the following 1243-residue polypeptide: ATP-dependent helicase/nuclease subunit A (1243 aa).

One can recognise a UvrD-like helicase ATP-binding domain in the interval 2–475; the sequence is VNWTKEQEEA…IDLARNFRSR (474 aa). An ATP-binding site is contributed by 23-30; it reads AAAGSGKT. One can recognise a UvrD-like helicase C-terminal domain in the interval 502 to 803; the sequence is AAELIYGNKM…RIMTIHKSKG (302 aa).

It belongs to the helicase family. AddA subfamily. In terms of assembly, heterodimer of AddA and AddB/RexB. Mg(2+) serves as cofactor.

The enzyme catalyses Couples ATP hydrolysis with the unwinding of duplex DNA by translocating in the 3'-5' direction.. The catalysed reaction is ATP + H2O = ADP + phosphate + H(+). The heterodimer acts as both an ATP-dependent DNA helicase and an ATP-dependent, dual-direction single-stranded exonuclease. Recognizes the chi site generating a DNA molecule suitable for the initiation of homologous recombination. The AddA nuclease domain is required for chi fragment generation; this subunit has the helicase and 3' -&gt; 5' nuclease activities. This chain is ATP-dependent helicase/nuclease subunit A, found in Oceanobacillus iheyensis (strain DSM 14371 / CIP 107618 / JCM 11309 / KCTC 3954 / HTE831).